A 348-amino-acid polypeptide reads, in one-letter code: Cyclin-dependent kinase inhibitor 1C (348 aa).

An Omega-N-methylarginine modification is found at Arg109. The disordered stretch occupies residues 115–348 (VAVIPRSGPP…VEQTPRKRLR (234 aa)). 2 stretches are compositionally biased toward acidic residues: residues 207–220 (QGEE…DELG) and 227–274 (QGEE…QDEN). Residues 275–284 (QEQRGQELKD) show a composition bias toward basic and acidic residues. Residues 309–312 (KRKR) carry the Nuclear localization signal motif.

Belongs to the CDI family. As to quaternary structure, interacts with PCNA. As to expression, expressed in the heart, brain, lung, skeletal muscle, kidney, pancreas and testis. High levels are seen in the placenta while low levels are seen in the liver.

The protein resides in the nucleus. Functionally, potent tight-binding inhibitor of several G1 cyclin/CDK complexes (cyclin E-CDK2, cyclin D2-CDK4, and cyclin A-CDK2) and, to lesser extent, of the mitotic cyclin B-CDC2. Negative regulator of cell proliferation. May play a role in maintenance of the non-proliferative state throughout life. The sequence is that of Cyclin-dependent kinase inhibitor 1C (Cdkn1c) from Mus musculus (Mouse).